A 314-amino-acid chain; its full sequence is Synaptophysin (314 aa).

Topologically, residues 1-25 (MLLLADMDVVNQLVAGGQFRVVKEP) are cytoplasmic. The MARVEL domain occupies 21–228 (VVKEPLGFVK…NLWFVFKETG (208 aa)). A helical transmembrane segment spans residues 26–49 (LGFVKVLQWVFAIFAFATCGSYTG). Residues 50–107 (ELRLSVECANKTESALNIEVEFEYPFRLHQVYFDAPSCVKGGTTKIFLVGDYSSSAEF) are Vesicular-facing. Asn59 carries N-linked (GlcNAc...) asparagine glycosylation. Tyr81 carries the post-translational modification Phosphotyrosine. Residues 108 to 131 (FVTVAVFAFLYSMGALATYIFLQN) traverse the membrane as a helical segment. Over 132–138 (KYRENNK) the chain is Cytoplasmic. A helical transmembrane segment spans residues 139-162 (GPMMDFLATAVFAFMWLVSSSAWA). Over 163–200 (KGLSDVKMATDPENIIKEMPMCRQTGNTCKELRDPVTS) the chain is Vesicular. A helical transmembrane segment spans residues 201–224 (GLNTSVVFGFLNLVLWVGNLWFVF). Topologically, residues 225–314 (KETGWAAPFM…GAPTSFSNQM (90 aa)) are cytoplasmic. Phosphothreonine is present on Thr227. Residues 239–314 (GAPEKQPAPG…GAPTSFSNQM (76 aa)) form a disordered region. Residues 254 to 264 (AGYGQGPGGYG) are compositionally biased toward gly residues. Residues 255–305 (GYGQGPGGYGPQDSYGPQGGYQPDYGQPASGGGGGYGPQGDYGQQGYGQQG) form a repeats, Gly-rich region. Over residues 265-282 (PQDSYGPQGGYQPDYGQP) the composition is skewed to low complexity. Phosphotyrosine occurs at positions 279 and 296. Residues 283–303 (ASGGGGGYGPQGDYGQQGYGQ) are compositionally biased toward gly residues.

This sequence belongs to the synaptophysin/synaptobrevin family. As to quaternary structure, homohexamer or homotetramer. Interacts with SRCIN1. Interacts with VAMP2; the interaction is inhibited by interaction of VAPM2 with SEPT8. Ubiquitinated; mediated by SIAH1 or SIAH2 and leading to its subsequent proteasomal degradation. Post-translationally, phosphorylated by SRC.

Its subcellular location is the cytoplasmic vesicle. It localises to the secretory vesicle. It is found in the synaptic vesicle membrane. The protein localises to the synapse. The protein resides in the synaptosome. Functionally, possibly involved in structural functions as organizing other membrane components or in targeting the vesicles to the plasma membrane. Involved in the regulation of short-term and long-term synaptic plasticity. The protein is Synaptophysin (Syp) of Mus musculus (Mouse).